Here is a 397-residue protein sequence, read N- to C-terminus: Elongation factor Tu (397 aa).

The tr-type G domain maps to 10–206 (KPHVNIGTIG…AVDTSIPQPE (197 aa)). Residues 19–26 (GHIDHGKT) are G1. GTP is bound at residue 19–26 (GHIDHGKT). A Mg(2+)-binding site is contributed by threonine 26. A G2 region spans residues 62–66 (GITIS). The segment at 83 to 86 (DCPG) is G3. Residues 83–87 (DCPGH) and 138–141 (NKSD) contribute to the GTP site. A G4 region spans residues 138–141 (NKSD). A G5 region spans residues 176 to 178 (SAL).

This sequence belongs to the TRAFAC class translation factor GTPase superfamily. Classic translation factor GTPase family. EF-Tu/EF-1A subfamily. In terms of assembly, monomer.

It is found in the cytoplasm. The enzyme catalyses GTP + H2O = GDP + phosphate + H(+). In terms of biological role, GTP hydrolase that promotes the GTP-dependent binding of aminoacyl-tRNA to the A-site of ribosomes during protein biosynthesis. The chain is Elongation factor Tu from Salinispora arenicola (strain CNS-205).